We begin with the raw amino-acid sequence, 303 residues long: Glycine betaine/carnitine/choline-binding protein OpuCC (303 aa).

An N-terminal signal peptide occupies residues 1 to 20; it reads MTKIKWLGAFALVFVMLLGG. The N-palmitoyl cysteine moiety is linked to residue C21. C21 carries the S-diacylglycerol cysteine lipid modification.

The protein belongs to the OsmX family. As to quaternary structure, the complex is composed of two ATP-binding proteins (OpuCA), two transmembrane proteins (OpuCB and OpuCD) and a solute-binding protein (OpuCC).

The protein localises to the cell membrane. Its function is as follows. Member of a high affinity multicomponent binding-protein-dependent transport system for glycine betaine, carnitine, and choline. This chain is Glycine betaine/carnitine/choline-binding protein OpuCC (opuCC), found in Bacillus subtilis (strain 168).